The sequence spans 119 residues: U-scoloptoxin(01)-Cw1a (119 aa).

Residues 1–22 form the signal peptide; sequence MSKATNFYLFVLLGVFVALVRT. The Chitin-binding type-2 domain maps to 38-96; the sequence is SFSCDGKKPGYYADQQMECQVYHVCTPDNEHAVLLCGPGTIFNQKHLVCDFPSNYACAD. A disulfide bond links Cys73 and Cys86.

The protein belongs to the scoloptoxin-01 family. Post-translationally, contains 3 disulfide bonds. In terms of tissue distribution, expressed by the venom gland.

It is found in the secreted. In Cormocephalus westwoodi (Westwood's green centipede), this protein is U-scoloptoxin(01)-Cw1a.